We begin with the raw amino-acid sequence, 435 residues long: Protein translocase subunit SecY (435 aa).

10 helical membrane passes run 19 to 39, 68 to 88, 116 to 136, 147 to 167, 179 to 199, 216 to 236, 269 to 289, 311 to 331, 372 to 392, and 395 to 415; these read ILFT…TVPG, FSVF…VQLL, YIAL…FDTL, VQTY…VTWL, GVSM…IKGI, FIFV…TTFV, VIPV…FQVV, ISGM…YTFV, VGSL…DVFG, and DAVA…IEGM.

It belongs to the SecY/SEC61-alpha family. In terms of assembly, component of the Sec protein translocase complex. Heterotrimer consisting of SecY, SecE and SecG subunits. The heterotrimers can form oligomers, although 1 heterotrimer is thought to be able to translocate proteins. Interacts with the ribosome. Interacts with SecDF, and other proteins may be involved. Interacts with SecA.

The protein localises to the cell membrane. In terms of biological role, the central subunit of the protein translocation channel SecYEG. Consists of two halves formed by TMs 1-5 and 6-10. These two domains form a lateral gate at the front which open onto the bilayer between TMs 2 and 7, and are clamped together by SecE at the back. The channel is closed by both a pore ring composed of hydrophobic SecY resides and a short helix (helix 2A) on the extracellular side of the membrane which forms a plug. The plug probably moves laterally to allow the channel to open. The ring and the pore may move independently. In Streptococcus sanguinis (strain SK36), this protein is Protein translocase subunit SecY.